Here is a 949-residue protein sequence, read N- to C-terminus: Lon protease homolog, mitochondrial (949 aa).

The N-terminal 65 residues, 1 to 65 (MAASTGYVRL…VLPGGVQWRG (65 aa)), are a transit peptide targeting the mitochondrion. Disordered regions lie at residues 68-94 (DSGN…TGEG) and 213-240 (EGLE…DELG). The Lon N-terminal domain occupies 112-359 (LPLIAITRNP…KALSLLKKEF (248 aa)). Positions 223 to 232 (KSRRKLKRGK) are enriched in basic residues. 512-519 (GPPGVGKT) serves as a coordination point for ATP. The region spanning 748–938 (VTPPGVVMGL…RDIFPIAFPR (191 aa)) is the Lon proteolytic domain. Residues serine 844 and lysine 887 contribute to the active site.

This sequence belongs to the peptidase S16 family. Homohexamer. Organized in a ring with a central cavity. The ATP-binding and proteolytic domains (AP-domain) form a hexameric chamber, while the N-terminal domain is arranged as a trimer of dimers. DNA and RNA binding is stimulated by substrate and inhibited by ATP binding. Interacts with TWNK and mitochondrial DNA polymerase subunit POLG. As to expression, detected in liver &gt; heart &gt; kidney &gt; testis.

It localises to the mitochondrion matrix. The enzyme catalyses Hydrolysis of proteins in presence of ATP.. Functionally, ATP-dependent serine protease that mediates the selective degradation of misfolded, unassembled or oxidatively damaged polypeptides as well as certain short-lived regulatory proteins in the mitochondrial matrix. Endogenous substrates include mitochondrial steroidogenic acute regulatory (StAR) protein, DELE1, helicase Twinkle (TWNK) and the large ribosomal subunit protein MRPL32/bL32m. MRPL32/bL32m is protected from degradation by LONP1 when it is bound to a nucleic acid (RNA), but TWNK is not. May also have a chaperone function in the assembly of inner membrane protein complexes. Participates in the regulation of mitochondrial gene expression and in the maintenance of the integrity of the mitochondrial genome. Binds to mitochondrial promoters and RNA in a single-stranded, site-specific, and strand-specific manner. May regulate mitochondrial DNA replication and/or gene expression using site-specific, single-stranded DNA binding to target the degradation of regulatory proteins binding to adjacent sites in mitochondrial promoters. The chain is Lon protease homolog, mitochondrial (Lonp1) from Mus musculus (Mouse).